The sequence spans 530 residues: Lanosterol 14-alpha demethylase CYP51 (530 aa).

Topologically, residues 1–20 (MSATKSIVGEALEYVNIGLS) are lumenal. A helical transmembrane segment spans residues 21-41 (HFLALPLAQRISLIIIIPFIY). The Cytoplasmic segment spans residues 42-530 (NIVWQLLYSL…WEKRNPEQKI (489 aa)). Lysine 116 is covalently cross-linked (Glycyl lysine isopeptide (Lys-Gly) (interchain with G-Cter in ubiquitin)). Lanosterol is bound at residue tyrosine 126. Position 314 (glycine 314) interacts with itraconazole. Glycyl lysine isopeptide (Lys-Gly) (interchain with G-Cter in ubiquitin) cross-links involve residues lysine 353 and lysine 454. The residue at position 458 (serine 458) is a Phosphoserine. Cysteine 470 is a heme binding site.

It belongs to the cytochrome P450 family. As to quaternary structure, interacts with ERG28. The cofactor is heme.

Its subcellular location is the endoplasmic reticulum membrane. The catalysed reaction is a 14alpha-methyl steroid + 3 reduced [NADPH--hemoprotein reductase] + 3 O2 = a Delta(14) steroid + formate + 3 oxidized [NADPH--hemoprotein reductase] + 4 H2O + 4 H(+). It catalyses the reaction a 14alpha-methyl steroid + reduced [NADPH--hemoprotein reductase] + O2 = a 14alpha-hydroxymethyl steroid + oxidized [NADPH--hemoprotein reductase] + H2O + H(+). The enzyme catalyses a 14alpha-hydroxymethyl steroid + reduced [NADPH--hemoprotein reductase] + O2 = a 14alpha-formyl steroid + oxidized [NADPH--hemoprotein reductase] + 2 H2O + H(+). It carries out the reaction a 14alpha-formyl steroid + reduced [NADPH--hemoprotein reductase] + O2 = a Delta(14) steroid + formate + oxidized [NADPH--hemoprotein reductase] + H2O + 2 H(+). The catalysed reaction is lanosterol + 3 reduced [NADPH--hemoprotein reductase] + 3 O2 = 4,4-dimethyl-5alpha-cholesta-8,14,24-trien-3beta-ol + formate + 3 oxidized [NADPH--hemoprotein reductase] + 4 H2O + 4 H(+). It catalyses the reaction lanosterol + reduced [NADPH--hemoprotein reductase] + O2 = 32-hydroxylanosterol + oxidized [NADPH--hemoprotein reductase] + H2O + H(+). The enzyme catalyses 32-hydroxylanosterol + reduced [NADPH--hemoprotein reductase] + O2 = 32-oxolanosterol + oxidized [NADPH--hemoprotein reductase] + 2 H2O + H(+). It carries out the reaction 32-oxolanosterol + reduced [NADPH--hemoprotein reductase] + O2 = 4,4-dimethyl-5alpha-cholesta-8,14,24-trien-3beta-ol + formate + oxidized [NADPH--hemoprotein reductase] + H2O + 2 H(+). It participates in steroid biosynthesis; zymosterol biosynthesis; zymosterol from lanosterol: step 1/6. In terms of biological role, sterol 14alpha-demethylase that plays a critical role in the third module of ergosterol biosynthesis pathway, being ergosterol the major sterol component in fungal membranes that participates in a variety of functions. The third module or late pathway involves the ergosterol synthesis itself through consecutive reactions that mainly occur in the endoplasmic reticulum (ER) membrane. Starting from lanosterol (lanosta-8,24-dien-3beta-ol), it catalyzes the three-step oxidative removal of the 14alpha-methyl group (C-32) of the sterol in the form of formate, and converts the sterol to 4,4-dimethyl-5alpha-cholesta-8,14,24-trien-3beta-ol, which is critical for ergosterol biosynthesis. Can demethylate substrates not intrinsic to yeast, such as eburicol (24-methylene-24,25-dihydrolanosterol) at a similar rate to lanosterol, and at a lower rate the 24,25-dihydrolanosterol (DHL) to 4,4-dimethyl-8,14-cholestadien-3beta-ol. The sequence is that of Lanosterol 14-alpha demethylase CYP51 from Saccharomyces cerevisiae (strain ATCC 204508 / S288c) (Baker's yeast).